The sequence spans 394 residues: Argininosuccinate synthase (394 aa).

8 to 16 (AYSGGLDTS) contributes to the ATP binding site. L-citrulline is bound by residues Tyr-86 and Ser-91. Gly-116 is an ATP binding site. L-aspartate contacts are provided by Thr-118, Asn-122, and Asp-123. Residue Asn-122 participates in L-citrulline binding. L-citrulline is bound by residues Arg-126, Ser-172, Ser-181, Glu-257, and Tyr-269.

Belongs to the argininosuccinate synthase family. Type 1 subfamily. As to quaternary structure, homotetramer.

The protein localises to the cytoplasm. It carries out the reaction L-citrulline + L-aspartate + ATP = 2-(N(omega)-L-arginino)succinate + AMP + diphosphate + H(+). The protein operates within amino-acid biosynthesis; L-arginine biosynthesis; L-arginine from L-ornithine and carbamoyl phosphate: step 2/3. This chain is Argininosuccinate synthase, found in Methanosarcina mazei (strain ATCC BAA-159 / DSM 3647 / Goe1 / Go1 / JCM 11833 / OCM 88) (Methanosarcina frisia).